A 198-amino-acid polypeptide reads, in one-letter code: MHYPEPISKLIDSFMKLPGIGPKTAIRLAFFVLTMKEDTVLEFAKSLVDVKRNIRYCTVCGHITDTDPCYICKDERRDRTTICVVQDPKDVIAMEKMKEYNGLYHVLHGAISPMEGIGPEDIKIAELLKRLQDEAVQEVILATNPNIEGEATAMYISRLLKPTGIKVTRIAHGLPVGGDLEYADEVTLSKALEGRREL.

The segment at 57–72 adopts a C4-type zinc-finger fold; the sequence is CTVCGHITDTDPCYIC. Positions 80–175 constitute a Toprim domain; it reads TTICVVQDPK…KVTRIAHGLP (96 aa).

This sequence belongs to the RecR family.

In terms of biological role, may play a role in DNA repair. It seems to be involved in an RecBC-independent recombinational process of DNA repair. It may act with RecF and RecO. In Geobacillus sp. (strain WCH70), this protein is Recombination protein RecR.